A 179-amino-acid polypeptide reads, in one-letter code: DELTA-actitoxin-Afr1e (179 aa).

Residues 1 to 29 (SADVAGAVIDGAGLGFDVLKTVLEALGNV) are N-terminal alpha-helix that contributes to the pore. The N-terminal region stretch occupies residues 11-30 (GAGLGFDVLKTVLEALGNVK). Arg-31 is an an N-(acyl)-sphingosylphosphocholine binding site. Residues Tyr-51 and Arg-53 each coordinate N-acetyl-D-glucosamine 6-sulfate. An N-(acyl)-sphingosylphosphocholine-binding residues include Arg-53, Ser-54, Arg-79, Gly-85, Tyr-108, Tyr-113, Ser-114, Trp-116, Tyr-133, Tyr-137, Tyr-138, Arg-144, and Gly-168. The segment at 105–120 (SVPYDYNWYSNWWNVR) is trp-rich region, which is important for the binding to lipid membrane. Position 138 (Tyr-138) interacts with N-acetyl-D-glucosamine 6-sulfate. The Cell attachment site, crucial for protein stability motif lies at 144 to 146 (RGD).

The protein belongs to the actinoporin family. Sea anemone subfamily. Octamer or nonamer in membranes. Monomer in the soluble state.

It localises to the secreted. The protein resides in the nematocyst. It is found in the target cell membrane. In terms of biological role, pore-forming toxin (PFT) that consists of a crown-shaped octamer or nonamer that forms cation-selective hydrophilic pores of about 1.5 nm (inside) and 13 nm (outside) and causes cytolysis. It causes cardiac stimulation. Also causes hemolysis (HC(50)=1.6 nM). Interestingly, the Phe-16 is crucial for hemolysis. Pore formation is a multi-step process that involves specific recognition of membrane sphingomyelin (but neither cholesterol nor phosphatidylcholine) using aromatic rich region and adjacent phosphocholine (POC) binding site, firm binding to the membrane (mainly driven by hydrophobic interactions) accompanied by the transfer of the N-terminal region to the lipid-water interface and finally pore formation after oligomerization of monomers. It is probable that a dimeric form is an assembly intermediate before the complete oligomerization. The formation of stable pores occurs only in vesicles composed of DOPC/SM (there is no oligomerization when the PFT is treated with vesicles of DOPC or SM alone). The transmembrane pore displays 8 lateral perforations, one at each subunit-subunit interface, partially occupied by the acyl-chain region of a bridging lipid. Each pore contains 24 lipid molecules, firmly bound to each subunit, that is, 3 lipids (L1, L2, L3, L4 and/or L5) are associated to each subunit. Lipid L1 bridges 2 subunits, whereas lipids L2 and L3 bind to sites at single subunit. The protein is DELTA-actitoxin-Afr1e of Actinia fragacea (Strawberry anemone).